Reading from the N-terminus, the 282-residue chain is F-box protein VBF (282 aa).

Residues 1-44 (MMMLPEACIANILAFTSPADAFSSSEVSSVFRLAGDSDFVWEKF) enclose the F-box domain.

Component of SCF(VBF) E3 ubiquitin ligase complex that interacts with VIP1. Interacts directly with SKP1A and VIP1. Forms a complex composed of VIP1, VBF and Agrobacterium virE2.

Functionally, component of SCF(VBF) E3 ubiquitin ligase complexes, which mediate the ubiquitination and subsequent proteasomal degradation of target proteins such as VIP1 and Agrobacterium virE2, after their implication in T-DNA translocation to the host nucleus (can functionally replace Agrobacterium VirF). Required during Agrobacterium-induced tumor formation. The protein is F-box protein VBF (VBF) of Arabidopsis thaliana (Mouse-ear cress).